Consider the following 502-residue polypeptide: ATP synthase subunit alpha (502 aa).

The segment at 115–139 (VDGLGPVETTETRPIESPAPGVMDR) is disordered. 169-176 (GDRQTGKT) serves as a coordination point for ATP.

This sequence belongs to the ATPase alpha/beta chains family. In terms of assembly, F-type ATPases have 2 components, CF(1) - the catalytic core - and CF(0) - the membrane proton channel. CF(1) has five subunits: alpha(3), beta(3), gamma(1), delta(1), epsilon(1). CF(0) has three main subunits: a(1), b(2) and c(9-12). The alpha and beta chains form an alternating ring which encloses part of the gamma chain. CF(1) is attached to CF(0) by a central stalk formed by the gamma and epsilon chains, while a peripheral stalk is formed by the delta and b chains.

The protein localises to the cell membrane. It catalyses the reaction ATP + H2O + 4 H(+)(in) = ADP + phosphate + 5 H(+)(out). Functionally, produces ATP from ADP in the presence of a proton gradient across the membrane. The alpha chain is a regulatory subunit. In Geobacillus thermodenitrificans (strain NG80-2), this protein is ATP synthase subunit alpha.